Consider the following 203-residue polypeptide: A-type ATP synthase subunit E (203 aa).

It belongs to the V-ATPase E subunit family. In terms of assembly, has multiple subunits with at least A(3), B(3), C, D, E, F, H, I and proteolipid K(x).

The protein localises to the cell membrane. Component of the A-type ATP synthase that produces ATP from ADP in the presence of a proton gradient across the membrane. The chain is A-type ATP synthase subunit E from Methanococcus maripaludis (strain C6 / ATCC BAA-1332).